The sequence spans 253 residues: MSGEVAAAVGGGAPEENGAPPNVTIYINNLNEKIKLEELKKSLRAVFSQFGKILDVLAFKTLKHKGQAWVVFEDVASATEALKSMQDFPFHNKPMRIQYAKTKSDIIAKADGTFVPRERRKRNDEKPEKKQKREQHHDVSQVGLGVNAYPGVYGAPPLSQLPFAGAQKVMMPEIIVPNNILFVQNLPHETTPMMLQMLFCQYPGFKEVRMVEAKPGIAFVEYGDEGQATAAMNHLQGFKITKDNQMLISYAKK.

An RRM 1 domain is found at 23–102 (VTIYINNLNE…KPMRIQYAKT (80 aa)). Residues 111-140 (DGTFVPRERRKRNDEKPEKKQKREQHHDVS) are disordered. An RRM 2 domain is found at 179–253 (NILFVQNLPH…NQMLISYAKK (75 aa)).

It belongs to the RRM U1 A/B'' family. In terms of assembly, component of the spliceosome where it is associated with snRNP U1.

It is found in the nucleus. The protein localises to the nucleolus. Its function is as follows. Involved in nuclear pre-mRNA splicing. This is U1 small nuclear ribonucleoprotein A from Oryza sativa subsp. indica (Rice).